A 248-amino-acid polypeptide reads, in one-letter code: Ras-like protein family member 11B (248 aa).

Residues 29–246 (AGRRLVKIAV…ALSAKVRTVT (218 aa)) form a small GTPase-like region. GTP contacts are provided by residues 40–47 (GASGVGKT), 87–91 (DTPGI), and 152–155 (NKAD). The segment at 205–229 (QQPSGTPEKRRTSLIPRPKSPNMQD) is disordered.

It belongs to the small GTPase superfamily. Ras family.

It carries out the reaction GTP + H2O = GDP + phosphate + H(+). The polypeptide is Ras-like protein family member 11B (Bos taurus (Bovine)).